We begin with the raw amino-acid sequence, 109 residues long: Serine protease inhibitor (109 aa).

The signal sequence occupies residues 1-28; that stretch reads MKMKLLQVHFVLLVSSSFLLGYTGMVTA. 5 disulfide bridges follow: cysteine 43–cysteine 83, cysteine 52–cysteine 79, cysteine 58–cysteine 73, cysteine 62–cysteine 104, and cysteine 85–cysteine 98. A TIL domain is found at 43–104; the sequence is CRENEIFSQC…QGVCILENSC (62 aa).

Belongs to the serine protease inhibitor-like (TIL domain-containing) family. In terms of tissue distribution, ubiquitously expressed (at protein level), including in venom glands. Found more precisely in the epidermis, fat body, gut, muscle, and venom of worker bees.

It is found in the secreted. Dual role peptide that functions as a broad-spectrum antimicrobial peptide and antifibrinolytic toxin. Inhibits trypsin (IC(50)=375 nM), plasmin (IC(50)=2140 nM), and microbial serine proteases (subtilisin A (IC(50)=294 nM) and proteinase K (IC(50)=459 nM)). Exhibits antifibrinolytic activity by binding and inhibiting plasmin. Does not inhibit chymotrypsin, elastase or thrombin. Binds to microbial cell wall carbohydrates (LPS, mannan and N-acetyl-D-glucosamine) and shows antimicrobial activity (MIC=4.1 uM against B.thuringiensis, MIC=4.95 uM against E.coli, MIC=9.6 uM against the fungus B.bassiana). Does not show hemolytic activity. This chain is Serine protease inhibitor, found in Bombus ignitus (Bumblebee).